The sequence spans 114 residues: UPF0145 protein PF1756 (114 aa).

Belongs to the UPF0145 family.

The chain is UPF0145 protein PF1756 from Pyrococcus furiosus (strain ATCC 43587 / DSM 3638 / JCM 8422 / Vc1).